A 173-amino-acid chain; its full sequence is Transcription factor E (173 aa).

The region spanning 3-88 (NNPIIQQVLL…TWRATFTKLP (86 aa)) is the HTH TFE/IIEalpha-type domain.

Belongs to the TFE family. In terms of assembly, monomer. Interaction with RNA polymerase subunits RpoF and RpoE is necessary for Tfe stimulatory transcription activity. Able to interact with Tbp and RNA polymerase in the absence of DNA promoter. Interacts both with the preinitiation and elongation complexes.

Functionally, transcription factor that plays a role in the activation of archaeal genes transcribed by RNA polymerase. Facilitates transcription initiation by enhancing TATA-box recognition by TATA-box-binding protein (Tbp), and transcription factor B (Tfb) and RNA polymerase recruitment. Not absolutely required for transcription in vitro, but particularly important in cases where Tbp or Tfb function is not optimal. It dynamically alters the nucleic acid-binding properties of RNA polymerases by stabilizing the initiation complex and destabilizing elongation complexes. Seems to translocate with the RNA polymerase following initiation and acts by binding to the non template strand of the transcription bubble in elongation complexes. This Methanococcus aeolicus (strain ATCC BAA-1280 / DSM 17508 / OCM 812 / Nankai-3) protein is Transcription factor E.